A 101-amino-acid polypeptide reads, in one-letter code: NADH-quinone oxidoreductase subunit K (101 aa).

Helical transmembrane passes span 4–24 (LSHYLVLGALLFAIGVVGIFL), 30–50 (IILLMSIELMLLAVNMNFVAF), and 61–81 (IFVFFILTVAAAEAAIGLAIL).

The protein belongs to the complex I subunit 4L family. In terms of assembly, NDH-1 is composed of 14 different subunits. Subunits NuoA, H, J, K, L, M, N constitute the membrane sector of the complex.

It localises to the cell inner membrane. The catalysed reaction is a quinone + NADH + 5 H(+)(in) = a quinol + NAD(+) + 4 H(+)(out). Functionally, NDH-1 shuttles electrons from NADH, via FMN and iron-sulfur (Fe-S) centers, to quinones in the respiratory chain. The immediate electron acceptor for the enzyme in this species is believed to be ubiquinone. Couples the redox reaction to proton translocation (for every two electrons transferred, four hydrogen ions are translocated across the cytoplasmic membrane), and thus conserves the redox energy in a proton gradient. The polypeptide is NADH-quinone oxidoreductase subunit K (Nitrosomonas europaea (strain ATCC 19718 / CIP 103999 / KCTC 2705 / NBRC 14298)).